The chain runs to 97 residues: Co-chaperonin GroES (97 aa).

The protein belongs to the GroES chaperonin family. In terms of assembly, heptamer of 7 subunits arranged in a ring. Interacts with the chaperonin GroEL.

Its subcellular location is the cytoplasm. In terms of biological role, together with the chaperonin GroEL, plays an essential role in assisting protein folding. The GroEL-GroES system forms a nano-cage that allows encapsulation of the non-native substrate proteins and provides a physical environment optimized to promote and accelerate protein folding. GroES binds to the apical surface of the GroEL ring, thereby capping the opening of the GroEL channel. The sequence is that of Co-chaperonin GroES from Proteus mirabilis (strain HI4320).